The chain runs to 379 residues: Probable malonyl-CoA-acyl carrier protein transacylase, mitochondrial (379 aa).

The transit peptide at 1–23 (MLAARRLLRSPRITGALSWSRWS) directs the protein to the mitochondrion. Residues Ser158 and His275 contribute to the active site.

Belongs to the type II malonyltransferase family.

It localises to the mitochondrion. The enzyme catalyses holo-[ACP] + malonyl-CoA = malonyl-[ACP] + CoA. Its pathway is lipid metabolism; fatty acid biosynthesis. In terms of biological role, catalyzes the transfer of a malonyl moiety from malonyl-CoA to the free thiol group of the phosphopantetheine arm of the ACP protein. This suggests the existence of the biosynthesis of fatty acids in mitochondria. The sequence is that of Probable malonyl-CoA-acyl carrier protein transacylase, mitochondrial from Drosophila melanogaster (Fruit fly).